Reading from the N-terminus, the 241-residue chain is Homeobox protein TGIF2LX (241 aa).

2 disordered regions span residues 1-58 and 126-210; these read MEAA…GNLP and TGKD…SPEE. The segment covering 21–39 has biased composition (polar residues); sequence AKTQSPAQDTSIMSRNNAD. A DNA-binding region (homeobox; TALE-type) is located at residues 48–111; that stretch reads EHKKKRKGNL…INARRRILPD (64 aa). A compositionally biased stretch (low complexity) spans 195-206; that stretch reads VSVTSPSSPELV.

The protein belongs to the TALE/TGIF homeobox family. As to expression, specifically expressed in adult testis.

The protein resides in the nucleus. Its function is as follows. May have a transcription role in testis. The protein is Homeobox protein TGIF2LX (TGIF2LX) of Homo sapiens (Human).